Reading from the N-terminus, the 699-residue chain is Conditioned medium factor (699 aa).

A signal peptide spans 1 to 18; it reads MRLLLLLILIITINFSYG. 4 N-linked (GlcNAc...) asparagine glycosylation sites follow: N130, N283, N346, and N430. Positions 680-699 are disordered; that stretch reads SPQQTTNTEYNKEMSSNSVW.

N- and O-glycosylated. Post-translationally, the N-terminus is blocked.

Its function is as follows. Involved in cell density sensing and might synchronize the onset of development by triggering aggregation when a majority of the cells in a given area have starved. The polypeptide is Conditioned medium factor (cmfA) (Dictyostelium discoideum (Social amoeba)).